The chain runs to 277 residues: Large ribosomal subunit protein uL2 (277 aa).

Residues 199 to 277 (DHGNINDGKA…ILRSRHQRKS (79 aa)) are disordered.

This sequence belongs to the universal ribosomal protein uL2 family. As to quaternary structure, part of the 50S ribosomal subunit. Forms a bridge to the 30S subunit in the 70S ribosome.

Its function is as follows. One of the primary rRNA binding proteins. Required for association of the 30S and 50S subunits to form the 70S ribosome, for tRNA binding and peptide bond formation. It has been suggested to have peptidyltransferase activity; this is somewhat controversial. Makes several contacts with the 16S rRNA in the 70S ribosome. This is Large ribosomal subunit protein uL2 from Mesorhizobium japonicum (strain LMG 29417 / CECT 9101 / MAFF 303099) (Mesorhizobium loti (strain MAFF 303099)).